A 469-amino-acid polypeptide reads, in one-letter code: Relaxin-3 receptor 1 (469 aa).

Residues methionine 1–arginine 81 are Extracellular-facing. N-linked (GlcNAc...) asparagine glycans are attached at residues asparagine 36 and asparagine 40. Residues isoleucine 82 to valine 102 traverse the membrane as a helical segment. The Cytoplasmic portion of the chain corresponds to leucine 103–leucine 119. The chain crosses the membrane as a helical span at residues phenylalanine 120–valine 140. Over glutamate 141–lysine 156 the chain is Extracellular. Cysteine 155 and cysteine 247 are disulfide-bonded. The helical transmembrane segment at isoleucine 157–serine 177 threads the bilayer. Residues valine 178 to lysine 215 are Cytoplasmic-facing. Residues alanine 216–serine 236 traverse the membrane as a helical segment. At threonine 237–glutamine 270 the chain is on the extracellular side. A helical transmembrane segment spans residues lysine 271–valine 291. The Cytoplasmic portion of the chain corresponds to arginine 292–threonine 329. Residues isoleucine 330 to isoleucine 350 form a helical membrane-spanning segment. Topologically, residues leucine 351–alanine 356 are extracellular. Residues valine 357–leucine 377 traverse the membrane as a helical segment. The Cytoplasmic segment spans residues alanine 378–tyrosine 469.

Belongs to the G-protein coupled receptor 1 family. Expressed predominantly in brain regions. Highest expression in substantia nigra and pituitary, followed by hippocampus, spinal cord, amygdala, caudate nucleus and corpus callosum, quite low level in cerebellum. In peripheral tissues, relatively high levels in adrenal glands, low levels in pancreas, salivary gland, placenta, mammary gland and testis.

Its subcellular location is the cell membrane. Its function is as follows. Receptor for RNL3/relaxin-3. Binding of the ligand inhibit cAMP accumulation. The protein is Relaxin-3 receptor 1 (RXFP3) of Homo sapiens (Human).